The primary structure comprises 26 residues: MSDTATRVQKIVVEHLGVESDKVTQE.

One can recognise a Carrier domain in the interval 2–26 (SDTATRVQKIVVEHLGVESDKVTQE).

The protein belongs to the acyl carrier protein (ACP) family. In terms of processing, 4'-phosphopantetheine is transferred from CoA to a specific serine of apo-ACP by AcpS. This modification is essential for activity because fatty acids are bound in thioester linkage to the sulfhydryl of the prosthetic group.

The protein resides in the cytoplasm. Its pathway is lipid metabolism; fatty acid biosynthesis. Carrier of the growing fatty acid chain in fatty acid biosynthesis. The protein is Acyl carrier protein (acpP) of Erythrobacter longus.